Here is a 560-residue protein sequence, read N- to C-terminus: MAAARLLPVPAGPQPLSFQAKLTFEDVAVLLSQDEWDRLCPAQRGLYRNVMMETYGNVVSLGLPGSKPDIISQLERGEDPWVLDRKGAKKSQGLWSDYSDNLKYDHTTACTQQDSLSCPWECETKGESQNTDLSPKPLISEQTVILGKTPLGRIDQENNETKQSFCLSPNSVDHREVQVLSQSMPLTPHQAVPSGERPYMCVECGKCFGRSSHLLQHQRIHTGEKPYVCSVCGKAFSQSSVLSKHRRIHTGEKPYECNECGKAFRVSSDLAQHHKIHTGEKPHECLECRKAFTQLSHLIQHQRIHTGERPYVCPLCGKAFNHSTVLRSHQRVHTGEKPHRCNECGKTFSVKRTLLQHQRIHTGEKPYTCSECGKAFSDRSVLIQHHNVHTGEKPYECSECGKTFSHRSTLMNHERIHTEEKPYACYECGKAFVQHSHLIQHQRVHTGEKPYVCGECGHAFSARRSLIQHERIHTGEKPFQCTECGKAFSLKATLIVHLRTHTGEKPYECNSCGKAFSQYSVLIQHQRIHTGEKPYECGECGRAFNQHGHLIQHQKVHRKL.

In terms of domain architecture, KRAB spans 22–93 (LTFEDVAVLL…DRKGAKKSQG (72 aa)). Glycyl lysine isopeptide (Lys-Gly) (interchain with G-Cter in SUMO2) cross-links involve residues Lys125, Lys136, Lys148, and Lys162. The segment at 199–221 (YMCVECGKCFGRSSHLLQHQRIH) adopts a C2H2-type 1 zinc-finger fold. Lys225 participates in a covalent cross-link: Glycyl lysine isopeptide (Lys-Gly) (interchain with G-Cter in SUMO2). 7 C2H2-type zinc fingers span residues 227–249 (YVCS…RRIH), 255–277 (YECN…HKIH), 283–305 (HECL…QRIH), 311–333 (YVCP…QRVH), 339–361 (HRCN…QRIH), 367–389 (YTCS…HNVH), and 395–417 (YECS…ERIH). Residue Lys421 forms a Glycyl lysine isopeptide (Lys-Gly) (interchain with G-Cter in SUMO2) linkage. C2H2-type zinc fingers lie at residues 423-445 (YACY…QRVH), 451-473 (YVCG…ERIH), 479-501 (FQCT…LRTH), 507-529 (YECN…QRIH), and 535-557 (YECG…QKVH).

Belongs to the krueppel C2H2-type zinc-finger protein family.

It is found in the nucleus. In terms of biological role, may be involved in transcriptional regulation. The sequence is that of Zinc finger protein 250 (ZNF250) from Homo sapiens (Human).